The chain runs to 393 residues: NAD(P)H-quinone oxidoreductase subunit H, chloroplastic (393 aa).

This sequence belongs to the complex I 49 kDa subunit family. In terms of assembly, NDH is composed of at least 16 different subunits, 5 of which are encoded in the nucleus.

Its subcellular location is the plastid. It localises to the chloroplast thylakoid membrane. It carries out the reaction a plastoquinone + NADH + (n+1) H(+)(in) = a plastoquinol + NAD(+) + n H(+)(out). The catalysed reaction is a plastoquinone + NADPH + (n+1) H(+)(in) = a plastoquinol + NADP(+) + n H(+)(out). Its function is as follows. NDH shuttles electrons from NAD(P)H:plastoquinone, via FMN and iron-sulfur (Fe-S) centers, to quinones in the photosynthetic chain and possibly in a chloroplast respiratory chain. The immediate electron acceptor for the enzyme in this species is believed to be plastoquinone. Couples the redox reaction to proton translocation, and thus conserves the redox energy in a proton gradient. This chain is NAD(P)H-quinone oxidoreductase subunit H, chloroplastic, found in Zea mays (Maize).